The sequence spans 164 residues: uncharacterized protein (164 aa).

This is an uncharacterized protein from Acanthamoeba polyphaga mimivirus (APMV).